The following is an 85-amino-acid chain: Serine protease inhibitor Cvsi-2 (85 aa).

The N-terminal stretch at 1–18 (MKVAVVVALLCFVCYTAA) is a signal peptide.

Contains 6 disulfide bonds. In terms of tissue distribution, detected in hemolymph (at protein level). Within the digestive gland expression is limited to the basophil cells of the digestive diverticula.

The protein resides in the secreted. Its function is as follows. Slow-binding inhibitor of serine proteases. The inhibitor rapidly binds to the protease forming a weak enzyme-inhibitor complex, and this is followed by a slow isomerization forming a tight-binding enzyme-inhibitor complex. Active against subtilisin A with a dissociation constant of 0.18 nM. Active against perkinsin. Not active against thermolysin, papain or pepsin. This chain is Serine protease inhibitor Cvsi-2, found in Crassostrea virginica (Eastern oyster).